A 94-amino-acid polypeptide reads, in one-letter code: Aspartyl/glutamyl-tRNA(Asn/Gln) amidotransferase subunit C (94 aa).

This sequence belongs to the GatC family. In terms of assembly, heterotrimer of A, B and C subunits.

The catalysed reaction is L-glutamyl-tRNA(Gln) + L-glutamine + ATP + H2O = L-glutaminyl-tRNA(Gln) + L-glutamate + ADP + phosphate + H(+). It carries out the reaction L-aspartyl-tRNA(Asn) + L-glutamine + ATP + H2O = L-asparaginyl-tRNA(Asn) + L-glutamate + ADP + phosphate + 2 H(+). Allows the formation of correctly charged Asn-tRNA(Asn) or Gln-tRNA(Gln) through the transamidation of misacylated Asp-tRNA(Asn) or Glu-tRNA(Gln) in organisms which lack either or both of asparaginyl-tRNA or glutaminyl-tRNA synthetases. The reaction takes place in the presence of glutamine and ATP through an activated phospho-Asp-tRNA(Asn) or phospho-Glu-tRNA(Gln). This Hydrogenobaculum sp. (strain Y04AAS1) protein is Aspartyl/glutamyl-tRNA(Asn/Gln) amidotransferase subunit C.